A 57-amino-acid chain; its full sequence is Alpha-conotoxin-like Sm1.2 (57 aa).

A signal peptide spans M1–S16. Positions F17–R42 are excised as a propeptide. A disordered region spans residues F17–C46. Residues S19 to D41 show a composition bias toward basic and acidic residues. Disulfide bonds link C45–C51 and C46–C56. C56 is subject to Cysteine amide.

The protein belongs to the conotoxin A superfamily. In terms of tissue distribution, expressed by the venom duct.

Its subcellular location is the secreted. In terms of biological role, alpha-conotoxins act on postsynaptic membranes, they bind to the nicotinic acetylcholine receptors (nAChR) and thus inhibit them. The chain is Alpha-conotoxin-like Sm1.2 from Conus stercusmuscarum (Fly-specked cone).